The sequence spans 1028 residues: Pentatricopeptide repeat-containing protein At3g09040, mitochondrial (1028 aa).

Residues 1 to 30 (MYFRVLLTPSSAMFDSFSFVRRLSYSPDLG) constitute a mitochondrion transit peptide. PPR repeat units lie at residues 94–123 (EGRL…FLEK), 124–158 (DVTA…QIFP), 159–193 (NKFT…GLER), 194–224 (NSYC…IVDP), 225–259 (NTVC…GHRP), 260–290 (DHLA…MSSP), 291–325 (DVVA…SVKS), 326–360 (TRST…GLAS), 361–391 (NIYV…LEEK), 392–426 (NDVF…GYNI), 427–461 (DDFT…KLAK), 462–492 (NLFV…MCDR), 493–527 (DNVT…GIVS), 528–562 (DGAC…GLDR), 563–593 (DLHT…LPEW), 594–627 (SVVS…GVNP), 628–662 (SEIT…GFSS), 664–694 (GEYL…LSSP), 696–730 (SIVL…GVLP), 731–765 (DQAT…AHDL), 766–796 (DELT…MRRR), 798–832 (NVVS…HIMP), 833–863 (DEIT…MIGQ), and 869–899 (RVDH…QNLK). The type E motif stretch occupies residues 904-979 (LWSSLLGACR…VPGYSWIDVE (76 aa)). The type E(+) motif stretch occupies residues 980–1010 (QRTHIFAAGDKSHSEIGKIEMFLEDLYDLMK).

This sequence belongs to the PPR family. PCMP-E subfamily.

The protein resides in the mitochondrion. The protein is Pentatricopeptide repeat-containing protein At3g09040, mitochondrial (PCMP-E88) of Arabidopsis thaliana (Mouse-ear cress).